Consider the following 245-residue polypeptide: Probable transcriptional regulatory protein LVIS_1199 (245 aa).

The segment at 1–23 (MSGHSKWHNIQGRKNAQDAKRGK) is disordered.

It belongs to the TACO1 family.

It localises to the cytoplasm. This chain is Probable transcriptional regulatory protein LVIS_1199, found in Levilactobacillus brevis (strain ATCC 367 / BCRC 12310 / CIP 105137 / JCM 1170 / LMG 11437 / NCIMB 947 / NCTC 947) (Lactobacillus brevis).